The sequence spans 478 residues: MLHLSDFSGSDALLSKPTEGCAHASPELPRLPARDAPSAAAYPGGDFLSWALSSCGAGGDLTDSCFLEGPAPTPPSGLSYSGSFFIQAVPEHPHDPEALFNLMSGILGLAPFPGPEAAASRSPLDVPFPAGPDALLPDLYSPDLSSAAFPEAFWEAAPSAGAPSQCLFEPQLSPPDVKPGLRAPPASPALDAAASAFKGPYAPWELLSAGVPGNCGSQGSFQTTPEARFSAVGTKVEDLLSISCPAELPGPAARLYQAGAYDTFSLAPGDLGEGTEGLPALLTPPGGEGGSGGEGGEFLAAPPAQLSPLGLRGAATADFSKPLVADLPGGSGVAAPSSPAASFPAAKARRKGRRGGKCSARCFCPRPHVKAFACPVESCVRSFARSDELNRHLRIHTGHKPFQCRICLRNFSRSDHLTTHVRTHTGEKPFACDVCGRRFARSDEKKRHSKVHLKQKARAEERLKGLGFYSLGLSFAAL.

Residues 275–302 (TEGLPALLTPPGGEGGSGGEGGEFLAAP) form a disordered region. A compositionally biased stretch (gly residues) spans 286–296 (GGEGGSGGEGG). C2H2-type zinc fingers lie at residues 372–396 (FACP…LRIH), 402–424 (FQCR…VRTH), and 430–452 (FACD…SKVH).

It belongs to the EGR C2H2-type zinc-finger protein family.

The protein resides in the nucleus. Its function is as follows. Transcriptional regulator. Recognizes and binds to the DNA sequence 5'-GCGGGGGCG-3' (GSG). Activates the transcription of target genes whose products are required for mitogenesis and differentiation. The sequence is that of Early growth response protein 4 (Egr4) from Mus musculus (Mouse).